The following is a 1738-amino-acid chain: Complement C4-B (1738 aa).

Residues 1–19 (MRLLWGLAWVFSFCASSLQ) form the signal peptide. Residues Cys-66 and Cys-95 are joined by a disulfide bond. Residue Asn-224 is glycosylated (N-linked (GlcNAc...) asparagine). A disulfide bond links Cys-633 and Cys-667. The propeptide occupies 674 to 677 (RQKR). Cystine bridges form between Cys-700–Cys-726, Cys-701–Cys-733, and Cys-714–Cys-734. Residues 700-734 (CCQDGMTKLPMKRTCEQRAARVPQQACREPFLSCC) enclose the Anaphylatoxin-like domain. N-linked (GlcNAc...) asparagine glycosylation is present at Asn-743. Positions 1006-1009 (CAEQ) form a cross-link, isoglutamyl cysteine thioester (Cys-Gln). N-linked (GlcNAc...) asparagine glycosylation is found at Asn-1324 and Asn-1387. A sulfotyrosine mark is found at Tyr-1413, Tyr-1416, and Tyr-1417. A propeptide spanning residues 1444–1447 (RRRR) is cleaved from the precursor. Cystine bridges form between Cys-1465/Cys-1529, Cys-1577/Cys-1582, Cys-1589/Cys-1667, Cys-1612/Cys-1736, and Cys-1712/Cys-1721. The NTR domain maps to 1589-1736 (CPRLLRSLER…FLMEFSSRGC (148 aa)).

In terms of assembly, in absence of complement activation, circulates in blood as a disulfide-linked trimer of an alpha, beta and gamma chain. Complement C4b is composed of complement C4b-A, complement C4 beta and complement C4 gamma chains that are associated via disulfide bonds. Non-enzymatic component of the C3 convertase, also named C4bC2b, composed of the serine protease complement C2b (C2), as well as complement C4b. Non-enzymatic component of the C5 convertase, also named C4bC2bC3b, composed of the serine protease complement C2b (C2), complement C3b, as well as complement C4b. In terms of processing, prior to secretion, the single-chain precursor is enzymatically cleaved by plasminogen (PLG) to yield non-identical chains alpha, beta and gamma. During activation of the complement systems, the alpha chain is cleaved into C4a and C4b by different proteases depending on the complement pathway: C4b stays linked to the beta and gamma chains, while C4a is released in the plasma. The alpha chain is cleaved by C1S to generate C4a and C4b following activation by the classical complement system. The alpha chain is cleaved to generate C4a and C4b by MASP2 following activation by the lectin complement system. The alpha chain is cleaved by GZMK to generate C4a and C4b following activation by the GZMK complement system. Further degradation of C4b by C1 into the inactive fragments C4c and C4d blocks the generation of C3 convertase. The proteolytic cleavages often are incomplete so that many structural forms can be found in plasma. Upon activation, the internal thioester bond reacts with carbohydrate antigens on the target surface to form amide or ester bonds, leading to covalent association with the surface of pathogens. Post-translationally, complement C4b interacts with complement C3b via a thioester linkage.

It localises to the secreted. The protein localises to the cell surface. Its function is as follows. Precursor of non-enzymatic components of the classical, lectin and GZMK complement pathways, which consist in a cascade of proteins that leads to phagocytosis and breakdown of pathogens and signaling that strengthens the adaptive immune system. Functionally, non-enzymatic component of C3 and C5 convertases. Generated following cleavage by complement proteases (C1S, MASP2 or GZMK, depending on the complement pathway), it covalently attaches to the surface of pathogens, where it acts as an opsonin that marks the surface of antigens for removal. It then recruits the serine protease complement C2b to form the C3 and C5 convertases, which cleave and activate C3 and C5, respectively, the next components of the complement pathways. Complement C4b-A isotype is responsible for effective binding to form amide bonds with immune aggregates or protein antigens, while complement C4b-B isotype catalyzes the transacylation of the thioester carbonyl group to form ester bonds with carbohydrate antigens. In terms of biological role, putative humoral mediator released following cleavage by complement proteases (C1S, MASP2 or GZMK, depending on the complement pathway). While it is strongly similar to anaphylatoxins, its role is unclear. Was reported to act as a mediator of local inflammatory process; however these effects were probably due to contamination with C3a and/C5a anaphylatoxins in biological assays. The polypeptide is Complement C4-B (Mus musculus (Mouse)).